Consider the following 904-residue polypeptide: NADH-quinone oxidoreductase subunit G (904 aa).

A 2Fe-2S ferredoxin-type domain is found at 1–83 (MATIHVDGKA…GTWISIDDEE (83 aa)). [2Fe-2S] cluster is bound by residues Cys34, Cys45, Cys48, and Cys67. Positions 83–122 (ESKAFRASVVEWLMTNHPHDCPVCEEGGHCHLQDMTVMTG) constitute a 4Fe-4S His(Cys)3-ligated-type domain. His99, Cys103, Cys106, Cys112, Cys151, Cys154, Cys157, Cys201, Cys228, Cys231, Cys235, and Cys263 together coordinate [4Fe-4S] cluster. One can recognise a 4Fe-4S Mo/W bis-MGD-type domain in the interval 221 to 277 (MQFAPSICHGCSSGCNISPGERYGELRRIENRFNGSVNQYFLCDRGRFGYGYVNRKD).

This sequence belongs to the complex I 75 kDa subunit family. As to quaternary structure, composed of 13 different subunits. Subunits NuoCD, E, F, and G constitute the peripheral sector of the complex. It depends on [2Fe-2S] cluster as a cofactor. The cofactor is [4Fe-4S] cluster.

It catalyses the reaction a quinone + NADH + 5 H(+)(in) = a quinol + NAD(+) + 4 H(+)(out). NDH-1 shuttles electrons from NADH, via FMN and iron-sulfur (Fe-S) centers, to quinones in the respiratory chain. The immediate electron acceptor for the enzyme in this species is believed to be ubiquinone. Couples the redox reaction to proton translocation (for every two electrons transferred, four hydrogen ions are translocated across the cytoplasmic membrane), and thus conserves the redox energy in a proton gradient. The chain is NADH-quinone oxidoreductase subunit G (nuoG) from Pseudomonas putida (strain ATCC 47054 / DSM 6125 / CFBP 8728 / NCIMB 11950 / KT2440).